The primary structure comprises 532 residues: Phosphoenolpyruvate carboxykinase (ATP) (532 aa).

Substrate-binding residues include Arg-60, Tyr-194, and Lys-200. Residues Lys-200, His-219, and 237–245 (GLSGTGKTT) contribute to the ATP site. Residues Lys-200 and His-219 each coordinate Mn(2+). Asp-258 lines the Mn(2+) pocket. Residues Glu-286, Arg-324, and Thr-449 each contribute to the ATP site. Arg-324 contributes to the substrate binding site.

This sequence belongs to the phosphoenolpyruvate carboxykinase (ATP) family. Mn(2+) serves as cofactor.

The protein localises to the cytoplasm. It catalyses the reaction oxaloacetate + ATP = phosphoenolpyruvate + ADP + CO2. It functions in the pathway carbohydrate biosynthesis; gluconeogenesis. In terms of biological role, involved in the gluconeogenesis. Catalyzes the conversion of oxaloacetate (OAA) to phosphoenolpyruvate (PEP) through direct phosphoryl transfer between the nucleoside triphosphate and OAA. The protein is Phosphoenolpyruvate carboxykinase (ATP) of Paracoccus denitrificans (strain Pd 1222).